Consider the following 222-residue polypeptide: Probable fimbrial chaperone EcpB (222 aa).

The signal sequence occupies residues 1 to 20; sequence MKKHLLPLALLFSGISPAQA.

It belongs to the EcpB/EcpE family.

Its function is as follows. Part of the ecpRABCDE operon, which encodes the E.coli common pilus (ECP). ECP is found in both commensal and pathogenic strains and plays a dual role in early-stage biofilm development and host cell recognition. This is Probable fimbrial chaperone EcpB (ecpB) from Escherichia coli (strain K12).